Here is a 137-residue protein sequence, read N- to C-terminus: Small ribosomal subunit protein bS6 (137 aa).

This sequence belongs to the bacterial ribosomal protein bS6 family.

In terms of biological role, binds together with bS18 to 16S ribosomal RNA. This chain is Small ribosomal subunit protein bS6, found in Sulfurimonas denitrificans (strain ATCC 33889 / DSM 1251) (Thiomicrospira denitrificans (strain ATCC 33889 / DSM 1251)).